The chain runs to 434 residues: MSRSRHLGKIRKRLEDVKSQWVRPARADFSDNESARLATDALLDGGSEAYWRVLSQEGEVDFLSSVEAQYIQAQAREPPCPPDTLGGAEAGPKGLDSSSLQSGTYFPVASEGSEPALLHSWASAEKPYLKEKSSATVYFQTVKHNNIRDLVRRCITRTSQVLVILMDVFTDVEIFCDILEAANKRGVFVCVLLDQGGVKLFQEMCDKVQISDSHLKNISIRSVEGEIYCAKSGRKFAGQIREKFIISDWRFVLSGSYSFTWLCGHVHRNILSKFTGQAVELFDEEFRHLYASSKPVMGLKSPRLVAPVPPGAAPANGRLSSSSGSASDRTSSNPFSGRSAGSHPGTRSVSASSGPCSPAAPHPPPPPRFQPHQGPWGAPSPQAHLSPRPHDGPPAAVYSNLGAYRPTRLQLEQLGLVPRLTPTWRPFLQASPHF.

The DUF1669 stretch occupies residues 1-298 (MSRSRHLGKI…LYASSKPVMG (298 aa)). Positions 76–97 (REPPCPPDTLGGAEAGPKGLDS) are disordered. 4 positions are modified to phosphoserine: S301, S327, S348, and S357. Positions 308 to 399 (VPPGAAPANG…HDGPPAAVYS (92 aa)) are disordered. Low complexity-rich tracts occupy residues 320–332 (SSSS…RTSS) and 348–357 (SVSASSGPCS). The span at 358 to 369 (PAAPHPPPPPRF) shows a compositional bias: pro residues.

It belongs to the FAM83 family. As to quaternary structure, directly interacts (via DUF1669) with casein kinase isoforms CSNK1A1, CSNK1A1L, CSNK1D and CSNK1E. In terms of processing, phosphorylated upon EGFR activation in a breast cancer cell line.

The protein resides in the cytoplasm. Functionally, involved in mitochondrial maintenance during adipogenesis. May be acting by playing a role in the maintenance of normal mitochondrial function. The chain is Protein FAM83A from Homo sapiens (Human).